A 692-amino-acid chain; its full sequence is Methionine--tRNA ligase (692 aa).

Residues proline 12–histidine 22 carry the 'HIGH' region motif. Residues cysteine 143, cysteine 146, cysteine 156, and cysteine 159 each coordinate Zn(2+). A 'KMSKS' region motif is present at residues lysine 341 to serine 345. Lysine 344 serves as a coordination point for ATP. The tRNA-binding domain maps to aspartate 586–arginine 692.

Belongs to the class-I aminoacyl-tRNA synthetase family. MetG type 1 subfamily. As to quaternary structure, homodimer. Zn(2+) is required as a cofactor.

Its subcellular location is the cytoplasm. It carries out the reaction tRNA(Met) + L-methionine + ATP = L-methionyl-tRNA(Met) + AMP + diphosphate. In terms of biological role, is required not only for elongation of protein synthesis but also for the initiation of all mRNA translation through initiator tRNA(fMet) aminoacylation. The protein is Methionine--tRNA ligase of Bordetella bronchiseptica (strain ATCC BAA-588 / NCTC 13252 / RB50) (Alcaligenes bronchisepticus).